We begin with the raw amino-acid sequence, 338 residues long: Beta-ketoacyl-[acyl-carrier-protein] synthase III (338 aa).

Residues Cys-119 and His-261 contribute to the active site. The segment at 262-266 is ACP-binding; that stretch reads QANQR. Residue Asn-291 is part of the active site.

This sequence belongs to the thiolase-like superfamily. FabH family. Homodimer.

It is found in the cytoplasm. It carries out the reaction malonyl-[ACP] + acetyl-CoA + H(+) = 3-oxobutanoyl-[ACP] + CO2 + CoA. Its pathway is lipid metabolism; fatty acid biosynthesis. Functionally, catalyzes the condensation reaction of fatty acid synthesis by the addition to an acyl acceptor of two carbons from malonyl-ACP. Catalyzes the first condensation reaction which initiates fatty acid synthesis and may therefore play a role in governing the total rate of fatty acid production. Possesses both acetoacetyl-ACP synthase and acetyl transacylase activities. Its substrate specificity determines the biosynthesis of branched-chain and/or straight-chain of fatty acids. This is Beta-ketoacyl-[acyl-carrier-protein] synthase III from Prochlorococcus marinus (strain SARG / CCMP1375 / SS120).